Here is a 169-residue protein sequence, read N- to C-terminus: NADH-quinone oxidoreductase subunit B (169 aa).

Residues Cys-42, Cys-43, Cys-107, and Cys-136 each coordinate [4Fe-4S] cluster.

This sequence belongs to the complex I 20 kDa subunit family. As to quaternary structure, NDH-1 is composed of 14 different subunits. Subunits NuoB, C, D, E, F, and G constitute the peripheral sector of the complex. The cofactor is [4Fe-4S] cluster.

Its subcellular location is the cell inner membrane. The enzyme catalyses a quinone + NADH + 5 H(+)(in) = a quinol + NAD(+) + 4 H(+)(out). Functionally, NDH-1 shuttles electrons from NADH, via FMN and iron-sulfur (Fe-S) centers, to quinones in the respiratory chain. The immediate electron acceptor for the enzyme in this species is believed to be ubiquinone. Couples the redox reaction to proton translocation (for every two electrons transferred, four hydrogen ions are translocated across the cytoplasmic membrane), and thus conserves the redox energy in a proton gradient. The polypeptide is NADH-quinone oxidoreductase subunit B (Nitratiruptor sp. (strain SB155-2)).